The primary structure comprises 2126 residues: Polycystin family receptor for egg jelly (2126 aa).

The N-terminal stretch at 1 to 18 (MWPGPALLLLGLGLGLGS) is a signal peptide. Over 19 to 1068 (QPPPTGPRGL…AIISNLTQNP (1050 aa)) the chain is Extracellular. The disordered stretch occupies residues 20 to 71 (PPPTGPRGLPGVLRGAPGLGQGAESSVRGGDTGGLSPRAAPRHASPTPPRRC). Asn84, Asn94, Asn129, Asn192, Asn243, Asn325, Asn571, Asn761, Asn774, Asn807, Asn849, Asn888, Asn960, and Asn1063 each carry an N-linked (GlcNAc...) asparagine glycan. In terms of domain architecture, REJ spans 102-797 (CIMQPVKINR…SMMFCEFADD (696 aa)). The chain crosses the membrane as a helical span at residues 1069–1089 (ATFLAVLFIMILYAILAFWAL). At 1090–1273 (HRDVIDLYFR…VPKPFNRLQR (184 aa)) the chain is on the cytoplasmic side. In terms of domain architecture, PLAT spans 1114-1231 (LCYLVTIFTG…TLDATFSVTN (118 aa)). The chain crosses the membrane as a helical span at residues 1274 to 1294 (LSCCLAMLLSSLVCNIMFFNL). Residues 1295-1311 (NQKEKIESRHMHIIRSM) lie on the Extracellular side of the membrane. Residues 1312-1332 (LIGIESVVITIPVQLLITFFF) traverse the membrane as a helical segment. Topologically, residues 1333–1449 (TYSQKNLKMN…KTQIILPRWC (117 aa)) are cytoplasmic. The interval 1379–1431 (RAAVSTSAPEEKEAFETSQKHEKADTQMSNKNSSNNNQEASEGVPPKAFSSQP) is disordered. Positions 1387–1403 (PEEKEAFETSQKHEKAD) are enriched in basic and acidic residues. Residues 1450-1470 (VYIAWFLVFATSGISSFFIVF) traverse the membrane as a helical segment. Topologically, residues 1471 to 1483 (YGVTYGYAKSIEW) are extracellular. Residues 1484 to 1504 (LFASFCSFCQSVFLVQPCNIL) form a helical membrane-spanning segment. Topologically, residues 1505–1580 (LRSGTRSYKP…RRENRIRRRS (76 aa)) are cytoplasmic. Residues 1581–1601 (FLFLSYLVTHFIFLTLLLLLI) traverse the membrane as a helical segment. The Extracellular segment spans residues 1602 to 1838 (FSLRHNDSFY…DFNRKTSSEI (237 aa)). Asn1607, Asn1676, Asn1766, and Asn1817 each carry an N-linked (GlcNAc...) asparagine glycan. The helical transmembrane segment at 1839 to 1859 (YLYAAILIFFCAYVVDEGYII) threads the bilayer. At 1860-1875 (RQERASYIRSVYNLLN) the chain is on the cytoplasmic side. Residues 1876–1896 (FSLKCMFALLIVLFFWKYFLA) form a helical membrane-spanning segment. At 1897–1918 (TKMVQLYLADPEAFIPFHAVSR) the chain is on the extracellular side. A helical membrane pass occupies residues 1919–1939 (VDHFMRIILAFLLFLTILKTL). Residues 1940–1964 (RYSRFFYNVRLAQKAIQAALPGICH) lie on the Cytoplasmic side of the membrane. Residues 1965–1985 (TALVVSIYSFMYVAFGYLVFG) form a helical membrane-spanning segment. Topologically, residues 1986–2019 (QHEWNYSNMIHATQTIFSYCVSAFQNTEFSGNKV) are extracellular. A helical transmembrane segment spans residues 2020–2040 (LGVLFLSSFMLVMICIFINLF). Residues 2041–2126 (QAVILSAYDE…NGKKMIYLVV (86 aa)) are Cytoplasmic-facing.

It belongs to the polycystin family. In terms of tissue distribution, exclusively expressed in testis.

The protein localises to the cell membrane. It is found in the cytoplasmic vesicle. It localises to the secretory vesicle. The protein resides in the acrosome membrane. Its subcellular location is the nucleus. In terms of biological role, testis-specific protein that controls sperm transport and the timing of zona pellucida-evoked exocytosis of the sperm acrosome. This Mus musculus (Mouse) protein is Polycystin family receptor for egg jelly (Pkdrej).